The primary structure comprises 1117 residues: Mitochondrial protein cyt-4 (1117 aa).

Residues 561–916 (RQDFYTSTVY…LVHWQIQAAL (356 aa)) form the RNB domain. The disordered stretch occupies residues 705–730 (VVLEVGTPPSAEDEAPTRKMTKPDEL). Residues 719–730 (APTRKMTKPDEL) are compositionally biased toward basic and acidic residues.

This sequence belongs to the RNR ribonuclease family. Homodimer.

The protein resides in the mitochondrion. Functionally, required for RNA 5'- and 3'-end processing and splicing. May act on the RNA processing enzymes directly, or it may act on other regulatory molecules, which influence the activity or synthesis of these enzymes. This is Mitochondrial protein cyt-4 (cyt-4) from Neurospora crassa (strain ATCC 24698 / 74-OR23-1A / CBS 708.71 / DSM 1257 / FGSC 987).